Reading from the N-terminus, the 321-residue chain is Digestive cysteine proteinase 3 (321 aa).

A signal peptide spans 1–16 (MKVAALFLCGLALATA). The propeptide at 17–106 (SPSWDHFKTQ…AVFTAEAGPM (90 aa)) is activation peptide. 3 disulfide bridges follow: Cys-127–Cys-170, Cys-161–Cys-203, and Cys-261–Cys-310. The active site involves Cys-130. Residues His-268 and Asn-288 contribute to the active site.

The protein belongs to the peptidase C1 family.

Inhibited by E-64, antipain, leupeptin, heavy metal ions, iodoacetic acid, dithionitrobenzene, p-hydroxymercuri-benzoate; activated by mercaptoethanol and dithiothreitol. This chain is Digestive cysteine proteinase 3 (LCP3), found in Homarus americanus (American lobster).